A 474-amino-acid chain; its full sequence is Synaptotagmin-17 (474 aa).

The tract at residues 60–117 (WLMASRSNDKDGDSVHTASDVPLTPRTNSPDGRRSSSDTSKSTYSLTRRISSLDSRRP) is disordered. The segment covering 96–117 (SDTSKSTYSLTRRISSLDSRRP) has biased composition (low complexity). Phosphoserine is present on residues Ser-118 and Ser-119. C2 domains follow at residues 184–310 (QLGM…HWWK) and 321–455 (ELGE…EQWH).

This sequence belongs to the synaptotagmin family. As to expression, expressed in brain and kidney.

The protein resides in the membrane. Its function is as follows. Plays a role in dendrite formation by melanocytes. The polypeptide is Synaptotagmin-17 (Syt17) (Rattus norvegicus (Rat)).